A 278-amino-acid chain; its full sequence is Pyrroline-5-carboxylate reductase (278 aa).

It belongs to the pyrroline-5-carboxylate reductase family.

It localises to the cytoplasm. The enzyme catalyses L-proline + NADP(+) = (S)-1-pyrroline-5-carboxylate + NADPH + 2 H(+). It carries out the reaction L-proline + NAD(+) = (S)-1-pyrroline-5-carboxylate + NADH + 2 H(+). It participates in amino-acid biosynthesis; L-proline biosynthesis; L-proline from L-glutamate 5-semialdehyde: step 1/1. The sequence is that of Pyrroline-5-carboxylate reductase from Actinidia chinensis var. chinensis (Chinese soft-hair kiwi).